A 320-amino-acid polypeptide reads, in one-letter code: GTP 3',8-cyclase (320 aa).

One can recognise a Radical SAM core domain in the interval 4 to 226 (TFQRSINYMR…PIITDATSPA (223 aa)). Arginine 13 lines the GTP pocket. Residues cysteine 20 and cysteine 24 each coordinate [4Fe-4S] cluster. Tyrosine 26 provides a ligand contact to S-adenosyl-L-methionine. Position 27 (cysteine 27) interacts with [4Fe-4S] cluster. Arginine 63 contributes to the GTP binding site. S-adenosyl-L-methionine is bound at residue glycine 67. A GTP-binding site is contributed by threonine 94. An S-adenosyl-L-methionine-binding site is contributed by serine 118. Lysine 155 is a GTP binding site. An S-adenosyl-L-methionine-binding site is contributed by methionine 189. Cysteine 249 and cysteine 252 together coordinate [4Fe-4S] cluster. 254-256 (RIR) provides a ligand contact to GTP. Cysteine 266 is a [4Fe-4S] cluster binding site.

The protein belongs to the radical SAM superfamily. MoaA family. In terms of assembly, monomer and homodimer. The cofactor is [4Fe-4S] cluster.

It carries out the reaction GTP + AH2 + S-adenosyl-L-methionine = (8S)-3',8-cyclo-7,8-dihydroguanosine 5'-triphosphate + 5'-deoxyadenosine + L-methionine + A + H(+). It functions in the pathway cofactor biosynthesis; molybdopterin biosynthesis. Functionally, catalyzes the cyclization of GTP to (8S)-3',8-cyclo-7,8-dihydroguanosine 5'-triphosphate. The sequence is that of GTP 3',8-cyclase from Alkaliphilus metalliredigens (strain QYMF).